A 676-amino-acid polypeptide reads, in one-letter code: Polyunsaturated fatty acid lipoxygenase ALOX15B (676 aa).

Residues 2-124 (AEFRVRVSTG…TLVLQEGTAK (123 aa)) enclose the PLAT domain. Ca(2+) is bound by residues glycine 15, glycine 17, aspartate 39, asparagine 40, glycine 42, glutamate 44, aspartate 85, and alanine 86. In terms of domain architecture, Lipoxygenase spans 125-676 (VSWADHHPVL…PPLIENSVSI (552 aa)). Fe cation is bound by residues histidine 373, histidine 378, histidine 553, and isoleucine 676.

The protein belongs to the lipoxygenase family. The cofactor is Fe cation. Expressed in hair, prostate, lung, ovary, lymph node, spinal cord and cornea.

Its subcellular location is the nucleus. It localises to the cytoplasm. It is found in the cytosol. The protein localises to the cell membrane. The protein resides in the cytoskeleton. Its subcellular location is the membrane. It localises to the cell junction. It is found in the adherens junction. The protein localises to the focal adhesion. The catalysed reaction is (5Z,8Z,11Z,14Z)-eicosatetraenoate + O2 = (15S)-hydroperoxy-(5Z,8Z,11Z,13E)-eicosatetraenoate. It carries out the reaction (9Z,12Z)-octadecadienoate + O2 = 13-hydroperoxy-(9Z,11E)-octadecadienoate. It catalyses the reaction (5S)-hydroxy-(6E,8Z,11Z,14Z)-eicosatetraenoate + O2 = (5S)-hydroxy-(15S)-hydroperoxy-(6E,8Z,11Z,13E)-eicosatetraenoate. The enzyme catalyses (5Z,8Z,11Z,14Z)-eicosatetraenoate + O2 = 5-hydroperoxy-(6E,8Z,11Z,14Z)-eicosatetraenoate. The catalysed reaction is (5S,6R)-dihydroxy-(7E,9E,11Z,14Z)-eicosatetraenoate + O2 = (5S,6R)-dihydroxy-(15S)-hydroperoxy-(7E,9E,11Z,13E)-eicosatetraenoate. It carries out the reaction (5S)-hydroperoxy-(6E,8Z,11Z,14Z)-eicosatetraenoate + O2 = (5S,15S)-dihydroperoxy-(6E,8Z,11Z,13E)-eicosatetraenoate. It catalyses the reaction 2-(5Z,8Z,11Z,14Z-eicosatetraenoyl)-glycerol + O2 = 2-[15(S)-hydroperoxy-(5Z,8Z,11Z,13E)-eicosatetraenoyl]-glycerol. The enzyme catalyses (8S)-hydroperoxy-(5Z,9E,11Z,14Z)-eicosatetraenoate + O2 = (8S,15S)-dihydroperoxy-(5Z,9E,11Z,13E)-eicosatetraenoate. The catalysed reaction is N-(5Z,8Z,11Z,14Z)-eicosatetraenoyl-L-alanine + O2 = N-(15S)-hydroperoxy-(5Z,8Z,11Z,13E)-eicosatetraenoyl-alanine. It carries out the reaction N-(5Z,8Z,11Z,14Z)-eicosatetraenoyl-gamma-aminobutanoate + O2 = N-(15S)-hydroperoxy-(5Z,8Z,11Z,13E)-eicosatetraenoyl-gamma-aminobutanoate. It catalyses the reaction N-(5Z,8Z,11Z,14Z)-eicosatetraenoyl-glycine + O2 = N-(15S)-hydroperoxy-(5Z,8Z,11Z,13E)-eicosatetraenoyl-glycine. The enzyme catalyses N-(5Z,8Z,11Z,14Z)-eicosatetraenoyl-taurine + O2 = N-(15S)-hydroperoxy-(5Z,8Z,11Z,13E)-eicosatetraenoyl-taurine. The catalysed reaction is 2-(5Z,8Z,11Z,14Z-eicosatetraenoyl)-glycerol + O2 = 2-[12-hydroperoxy-(5Z,8Z,10E,14Z)-eicosatetraenoyl]-glycerol. It carries out the reaction 1-octadecanoyl-2-(5Z,8Z,11Z,14Z-eicosatetraenoyl)-sn-glycero-3-phosphocholine + O2 = 1-octadecanoyl-2-(15-hydroperoxy-5Z,8Z,11Z,13E-eicosatetraenoyl)-sn-glycero-3-phosphocholine. It catalyses the reaction a 1-acyl-2-(5Z,8Z,11Z,14Z-eicosatetraenoyl)-sn-glycero-3-phospho-(1D-myo-inositol) + O2 = a 1-acyl-2-(15-hydroperoxy-5Z,8Z,11Z,13E-eicosatetraenoyl)-sn-glycero-3-phospho-(1D-myo-inositol). The enzyme catalyses a 1-acyl-2-(8Z,11Z,14Z-eicosatrienoyl)-sn-glycero-3-phospho-(1D-myo-inositol) + O2 = a 1-acyl-2-(15-hydroperoxy-8Z,11Z,13E-eicosatrienoyl)-sn-glycero-3-phospho-(1D-myo-inositol). The catalysed reaction is 1-octadecanoyl-2-(5Z,8Z,11Z,14Z)-eicosatetraenoyl-sn-glycero-3-phosphoethanolamine + O2 = 1-octadecanoyl-2-(15-hydroperoxy-5Z,8Z,11Z,13E-eicosatetraenoyl)-sn-glycero-3-phosphoethanolamine. It carries out the reaction 1-octadecanoyl-2-(5Z,8Z,11Z,14Z-eicosatetraenoyl)-sn-glycero-3-phospho-(1D-myo-inositol) + O2 = 1-octadecanoyl-2-(15-hydroperoxy-5Z,8Z,11Z,13E-eicosatetraenoyl)-sn-glycero-3-phospho-(1D-myo-inositol). It catalyses the reaction (8Z,11Z,14Z)-eicosatrienoate + O2 = 15-hydroperoxy-(8Z,11Z,13E)-eicosatrienoate. The enzyme catalyses (7S)-hydroperoxy-(4Z,8E,10Z,13Z,16Z,19Z)-docosahexaenoate + O2 = (7S,17S)-dihydroperoxy-(4Z,8E,10Z,13Z,15E,19Z)-docosahexaenoate. The catalysed reaction is (5Z,8Z,11Z,14Z)-eicosatetraenoate + O2 = 15-hydroperoxy-(5Z,8Z,11Z,13E)-eicosatetraenoate. Its pathway is lipid metabolism; hydroperoxy eicosatetraenoic acid biosynthesis. Non-heme iron-containing dioxygenase that catalyzes the stereo-specific peroxidation of free and esterified polyunsaturated fatty acids (PUFAs) generating a spectrum of bioactive lipid mediators. It inserts peroxyl groups at C15 of arachidonate ((5Z,8Z,11Z,14Z)-eicosatetraenoate) producing (15S)-hydroperoxyeicosatetraenoate/(15S)-HPETE. Also peroxidizes linoleate ((9Z,12Z)-octadecadienoate) to 13-hydroperoxyoctadecadienoate/13-HPODE. Oxygenates arachidonyl derivatives such as 2-arachidonoylglycerol (2-AG) leading to the production and extracellular release of 15-hydroxyeicosatetraenoyl glycerol (15-HETE-G) that acts as a peroxisome proliferator-activated receptor alpha agonist. Has the ability to efficiently class-switch ALOX5 pro-inflammatory mediators into anti-inflammatory intermediates. Participates in the sequential oxidations of DHA ((4Z,7Z,10Z,13Z,16Z,19Z)-docosahexaenoate) to generate specialized pro-resolving mediators (SPMs) resolvin D5 ((7S,17S)-diHPDHA), which can actively down-regulate the immune response and have anti-aggregation properties with platelets. In addition to free PUFAs hydrolyzed from phospholipids, it directly oxidizes PUFAs esterified to membrane-bound phospholipids. Has no detectable 8S-lipoxygenase activity on arachidonate but reacts with (8S)-HPETE to produce (8S,15S)-diHPETE. May regulate progression through the cell cycle and cell proliferation. May also regulate cytokine secretion by macrophages and therefore play a role in the immune response. May also regulate macrophage differentiation into proatherogenic foam cells. Its function is as follows. Does not convert arachidonic acid to 15S-hydroperoxyeicosatetraenoic acid/(15S)-HPETE. This chain is Polyunsaturated fatty acid lipoxygenase ALOX15B, found in Homo sapiens (Human).